A 565-amino-acid chain; its full sequence is Urease subunit beta (565 aa).

A Urease domain is found at 130–565; it reads GGIDTHIHFI…LALARKYFMI (436 aa). Histidine 135, histidine 137, and lysine 218 together coordinate Ni(2+). Lysine 218 bears the N6-carboxylysine mark. Substrate is bound at residue histidine 220. Histidine 247 and histidine 273 together coordinate Ni(2+). Histidine 321 serves as the catalytic Proton donor. Aspartate 361 contacts Ni(2+).

Belongs to the metallo-dependent hydrolases superfamily. Urease alpha subunit family. As to quaternary structure, heterohexamer of 3 UreA (alpha) and 3 UreB (beta) subunits. Ni cation is required as a cofactor. Carboxylation allows a single lysine to coordinate two nickel ions.

The protein localises to the cytoplasm. It catalyses the reaction urea + 2 H2O + H(+) = hydrogencarbonate + 2 NH4(+). Its pathway is nitrogen metabolism; urea degradation; CO(2) and NH(3) from urea (urease route): step 1/1. The protein is Urease subunit beta of Campylobacter lari.